A 171-amino-acid chain; its full sequence is NADH-quinone oxidoreductase subunit B 1 (171 aa).

The [4Fe-4S] cluster site is built by Cys44, Cys45, Cys110, and Cys139.

It belongs to the complex I 20 kDa subunit family. As to quaternary structure, NDH-1 is composed of 14 different subunits. Subunits NuoB, C, D, E, F, and G constitute the peripheral sector of the complex. Requires [4Fe-4S] cluster as cofactor.

It is found in the cell inner membrane. It carries out the reaction a quinone + NADH + 5 H(+)(in) = a quinol + NAD(+) + 4 H(+)(out). NDH-1 shuttles electrons from NADH, via FMN and iron-sulfur (Fe-S) centers, to quinones in the respiratory chain. The immediate electron acceptor for the enzyme in this species is believed to be ubiquinone. Couples the redox reaction to proton translocation (for every two electrons transferred, four hydrogen ions are translocated across the cytoplasmic membrane), and thus conserves the redox energy in a proton gradient. In Opitutus terrae (strain DSM 11246 / JCM 15787 / PB90-1), this protein is NADH-quinone oxidoreductase subunit B 1.